Here is a 412-residue protein sequence, read N- to C-terminus: Peptidase T (412 aa).

Residue histidine 84 participates in Zn(2+) binding. Aspartate 86 is an active-site residue. Aspartate 146 provides a ligand contact to Zn(2+). Glutamate 179 serves as the catalytic Proton acceptor. Glutamate 180, aspartate 202, and histidine 385 together coordinate Zn(2+).

Belongs to the peptidase M20B family. The cofactor is Zn(2+).

The protein localises to the cytoplasm. It carries out the reaction Release of the N-terminal residue from a tripeptide.. Cleaves the N-terminal amino acid of tripeptides. In Haemophilus influenzae (strain PittEE), this protein is Peptidase T.